The sequence spans 250 residues: Triosephosphate isomerase (250 aa).

9–11 (NWK) serves as a coordination point for substrate. The active-site Electrophile is the His94. Glu165 acts as the Proton acceptor in catalysis. Substrate-binding positions include Gly171, Ser211, and 232–233 (GG).

The protein belongs to the triosephosphate isomerase family. Homodimer.

The protein localises to the cytoplasm. It catalyses the reaction D-glyceraldehyde 3-phosphate = dihydroxyacetone phosphate. It participates in carbohydrate biosynthesis; gluconeogenesis. It functions in the pathway carbohydrate degradation; glycolysis; D-glyceraldehyde 3-phosphate from glycerone phosphate: step 1/1. In terms of biological role, involved in the gluconeogenesis. Catalyzes stereospecifically the conversion of dihydroxyacetone phosphate (DHAP) to D-glyceraldehyde-3-phosphate (G3P). This Alkalilimnicola ehrlichii (strain ATCC BAA-1101 / DSM 17681 / MLHE-1) protein is Triosephosphate isomerase.